The primary structure comprises 344 residues: AA9 family lytic polysaccharide monooxygenase J (344 aa).

Residues 1–20 (MKSSLLVVLTAGLAVRDAIA) form the signal peptide. Positions 21 and 99 each coordinate Cu(2+). The cysteines at positions 58 and 194 are disulfide-linked. Histidine 180 and glutamine 189 together coordinate O2. Tyrosine 191 lines the Cu(2+) pocket. Positions 272–301 (PGGKPASGGSDGNAPEVAEPSGGEGSPSAP) are disordered. The span at 285–301 (APEVAEPSGGEGSPSAP) shows a compositional bias: low complexity. The 38-residue stretch at 304–341 (CEVAAYGQCGGDQYSGCTQCASGYTCKAVSPPYYSQCA) folds into the CBM1 domain.

Belongs to the polysaccharide monooxygenase AA9 family. It depends on Cu(2+) as a cofactor.

It localises to the secreted. The catalysed reaction is [(1-&gt;4)-beta-D-glucosyl]n+m + reduced acceptor + O2 = 4-dehydro-beta-D-glucosyl-[(1-&gt;4)-beta-D-glucosyl]n-1 + [(1-&gt;4)-beta-D-glucosyl]m + acceptor + H2O.. Lytic polysaccharide monooxygenase (LPMO) that depolymerizes crystalline and amorphous polysaccharides via the oxidation of scissile alpha- or beta-(1-4)-glycosidic bonds, yielding C4 oxidation products. Catalysis by LPMOs requires the reduction of the active-site copper from Cu(II) to Cu(I) by a reducing agent and H(2)O(2) or O(2) as a cosubstrate. In Neurospora crassa (strain ATCC 24698 / 74-OR23-1A / CBS 708.71 / DSM 1257 / FGSC 987), this protein is AA9 family lytic polysaccharide monooxygenase J (gh61-10).